The following is a 440-amino-acid chain: D-serine dehydratase (440 aa).

K116 is modified (N6-(pyridoxal phosphate)lysine).

This sequence belongs to the serine/threonine dehydratase family. DsdA subfamily. As to quaternary structure, monomer. Pyridoxal 5'-phosphate is required as a cofactor.

It carries out the reaction D-serine = pyruvate + NH4(+). The protein is D-serine dehydratase of Salmonella typhi.